The chain runs to 82 residues: Small ribosomal subunit protein uS17 (82 aa).

Belongs to the universal ribosomal protein uS17 family. In terms of assembly, part of the 30S ribosomal subunit.

In terms of biological role, one of the primary rRNA binding proteins, it binds specifically to the 5'-end of 16S ribosomal RNA. This Rhodopseudomonas palustris (strain TIE-1) protein is Small ribosomal subunit protein uS17.